Consider the following 717-residue polypeptide: Pentatricopeptide repeat-containing protein At1g53600, mitochondrial (717 aa).

The N-terminal 47 residues, 1–47 (MVMRPISNKGLIYRHNICLRCNSTLAVSNHEPITQKTRNFLETTTTS), are a transit peptide targeting the mitochondrion. PPR repeat units follow at residues 49 to 79 (AIFQ…MSNR), 80 to 110 (SIVS…MPVR), 111 to 142 (VTTS…IPEK), 143 to 173 (NAVS…TPVK), 176 to 206 (DSVA…MAVK), 207 to 241 (EVVS…NVIT), 242 to 272 (WTAM…GDVK), 274 to 308 (NSNT…PLEF), 309 to 339 (DLFL…MKNK), 340 to 374 (DSVS…DMVS), 375 to 401 (WTDM…MPEK), 402 to 436 (DNIT…EVCP), 437 to 471 (NSYT…NIVN), 472 to 502 (DLSV…ISEP), 503 to 537 (NIVS…GKEP), 538 to 568 (NGVT…MKSS), and 574 to 604 (GPDH…MPCK). The tract at residues 609 to 684 (VWGSLLSASK…DPGSSWIILK (76 aa)) is type E motif. Residues 685 to 715 (GEVHNFLAGDESQLNLEEIGFTLKMIRKEME) form a type E(+) motif region.

It belongs to the PPR family. PCMP-E subfamily.

Its subcellular location is the mitochondrion. The sequence is that of Pentatricopeptide repeat-containing protein At1g53600, mitochondrial (PCMP-E63) from Arabidopsis thaliana (Mouse-ear cress).